The following is a 77-amino-acid chain: DNA-directed RNA polymerase subunit epsilon (77 aa).

Belongs to the RNA polymerase subunit epsilon family. RNAP is composed of a core of 2 alpha, a beta and a beta' subunit. The core is associated with a delta subunit, and at least one of epsilon or omega. When a sigma factor is associated with the core the holoenzyme is formed, which can initiate transcription.

It carries out the reaction RNA(n) + a ribonucleoside 5'-triphosphate = RNA(n+1) + diphosphate. In terms of biological role, a non-essential component of RNA polymerase (RNAP). This is DNA-directed RNA polymerase subunit epsilon from Streptococcus pneumoniae serotype 2 (strain D39 / NCTC 7466).